Here is a 282-residue protein sequence, read N- to C-terminus: Bifunctional protein FolD (282 aa).

NADP(+) is bound by residues 165–167, S190, and T231; that span reads GRS.

It belongs to the tetrahydrofolate dehydrogenase/cyclohydrolase family. As to quaternary structure, homodimer.

It carries out the reaction (6R)-5,10-methylene-5,6,7,8-tetrahydrofolate + NADP(+) = (6R)-5,10-methenyltetrahydrofolate + NADPH. The catalysed reaction is (6R)-5,10-methenyltetrahydrofolate + H2O = (6R)-10-formyltetrahydrofolate + H(+). It participates in one-carbon metabolism; tetrahydrofolate interconversion. Catalyzes the oxidation of 5,10-methylenetetrahydrofolate to 5,10-methenyltetrahydrofolate and then the hydrolysis of 5,10-methenyltetrahydrofolate to 10-formyltetrahydrofolate. The sequence is that of Bifunctional protein FolD from Clostridium botulinum (strain Eklund 17B / Type B).